Consider the following 573-residue polypeptide: Isocitrate dehydrogenase kinase/phosphatase (573 aa).

Residues 315 to 321 and Lys-336 contribute to the ATP site; that span reads APGIRGM. Asp-371 is an active-site residue.

This sequence belongs to the AceK family.

The protein localises to the cytoplasm. The enzyme catalyses L-seryl-[isocitrate dehydrogenase] + ATP = O-phospho-L-seryl-[isocitrate dehydrogenase] + ADP + H(+). In terms of biological role, bifunctional enzyme which can phosphorylate or dephosphorylate isocitrate dehydrogenase (IDH) on a specific serine residue. This is a regulatory mechanism which enables bacteria to bypass the Krebs cycle via the glyoxylate shunt in response to the source of carbon. When bacteria are grown on glucose, IDH is fully active and unphosphorylated, but when grown on acetate or ethanol, the activity of IDH declines drastically concomitant with its phosphorylation. This chain is Isocitrate dehydrogenase kinase/phosphatase, found in Enterobacter sp. (strain 638).